The sequence spans 309 residues: DNA-directed RNA polymerase subunit alpha (309 aa).

Residues 1-227 are alpha N-terminal domain (alpha-NTD); it reads MTFQVECVES…ALFEPLKNVS (227 aa). The alpha C-terminal domain (alpha-CTD) stretch occupies residues 237 to 309; the sequence is EPTPESQTPI…GIKLQESKVS (73 aa).

This sequence belongs to the RNA polymerase alpha chain family. In cyanobacteria the RNAP catalytic core is composed of 2 alpha, 1 beta, 1 beta', 1 gamma and 1 omega subunit. When a sigma factor is associated with the core the holoenzyme is formed, which can initiate transcription.

It catalyses the reaction RNA(n) + a ribonucleoside 5'-triphosphate = RNA(n+1) + diphosphate. Its function is as follows. DNA-dependent RNA polymerase catalyzes the transcription of DNA into RNA using the four ribonucleoside triphosphates as substrates. The sequence is that of DNA-directed RNA polymerase subunit alpha from Synechococcus elongatus (strain ATCC 33912 / PCC 7942 / FACHB-805) (Anacystis nidulans R2).